The sequence spans 316 residues: CXXC-type zinc finger protein 5 (316 aa).

Residues 1–10 are compositionally biased toward gly residues; sequence MSSLGGGSQD. A disordered region spans residues 1–95; that stretch reads MSSLGGGSQD…SGGAGSMMGG (95 aa). Low complexity-rich tracts occupy residues 11–27 and 36–50; these read AGGSSSSSNTSSSSGSG and SATVAATAPASVADD. The CXXC-type zinc-finger motif lies at 250-291; it reads GKKKRKRCGMCAPCRRRINCEQCSSCRNRKTGHQICKFRKCE. The Nuclear localization signal motif lies at 251–256; it reads KKKRKR. Positions 257, 260, 263, 269, 272, 275, 285, and 290 each coordinate Zn(2+).

In terms of assembly, interacts with DVL1. Interacts with RBPJ. As to expression, expressed in neural stem cells (at protein level). Expressed in the dorsal telencephalon.

Its subcellular location is the nucleus. It is found in the cytoplasm. In terms of biological role, may indirectly participate in activation of the NF-kappa-B and MAPK pathways. Required for DNA damage-induced ATM phosphorylation, p53 activation and cell cycle arrest. Involved in myelopoiesis. Acts as a mediator of BMP4-mediated modulation of canonical Wnt signaling activity in neural stem cells. Binds to the oxygen responsive element of COX4I2 and represses its transcription under hypoxia conditions (4% oxygen), as well as normoxia conditions (20% oxygen). May repress COX4I2 transactivation induced by CHCHD2 and RBPJ. Binds preferentially to DNA containing cytidine-phosphate-guanosine (CpG) dinucleotides over CpH (H=A, T, and C), hemimethylated-CpG and hemimethylated-hydroxymethyl-CpG. The polypeptide is CXXC-type zinc finger protein 5 (Cxxc5) (Rattus norvegicus (Rat)).